Reading from the N-terminus, the 35-residue chain is Kappa-theraphotoxin-Gr1b (35 aa).

Intrachain disulfides connect Cys-2-Cys-16, Cys-9-Cys-21, and Cys-15-Cys-28. The tract at residues 4–6 is involved in active face; that stretch reads YLF.

Belongs to the neurotoxin 10 (Hwtx-1) family. 09 (HaTx) subfamily. Expressed by the venom gland.

The protein localises to the secreted. Its function is as follows. Inhibitor of voltage-gated potassium channels. Inhibits Kv2.1/KCNB1 channels, by shifting activation of the channel to more depolarized voltages. The toxin binding sites may be situated on the S3-S4 extracellular linker of the channel. One, two, three or four toxin molecules may bind the Kv2.1/KCNB1 channel. May need to partition into the membrane in order to bind to the channel. Antibacterial activity is not observed. This is Kappa-theraphotoxin-Gr1b from Grammostola rosea (Chilean rose tarantula).